Here is a 402-residue protein sequence, read N- to C-terminus: uncharacterized protein (402 aa).

12 helical membrane passes run 23–43, 52–72, 90–110, 121–141, 158–178, 180–200, 228–248, 255–275, 282–302, 309–329, 351–371, and 375–395; these read IVSV…PLAV, LGYG…ATLL, VLYG…SVAI, LLVG…AAIG, WNGI…VLLV, WLGL…GFAL, GMGL…ITLY, ANAV…RLLF, LGGF…LLLL, WVGL…FPAF, LFVD…ANLF, and SMFL…IALH.

Belongs to the major facilitator superfamily. YhhS family.

Its subcellular location is the cell inner membrane. This is an uncharacterized protein from Pseudomonas aeruginosa (strain UCBPP-PA14).